Reading from the N-terminus, the 780-residue chain is LPS-assembly protein LptD (780 aa).

A signal peptide spans Met-1–Ala-24.

It belongs to the LptD family. In terms of assembly, component of the lipopolysaccharide transport and assembly complex. Interacts with LptE and LptA.

It is found in the cell outer membrane. Its function is as follows. Together with LptE, is involved in the assembly of lipopolysaccharide (LPS) at the surface of the outer membrane. In Sodalis glossinidius (strain morsitans), this protein is LPS-assembly protein LptD.